The following is a 190-amino-acid chain: NAD(P)H-quinone oxidoreductase subunit I (190 aa).

2 consecutive 4Fe-4S ferredoxin-type domains span residues 55–84 (GRIHFEFDKCIACEVCVRVCPINLPVVDWT) and 95–124 (KHYSIDFGVCIFCGNCVEYCPTNCLSMTEE). Positions 64, 67, 70, 74, 104, 107, 110, and 114 each coordinate [4Fe-4S] cluster. A disordered region spans residues 169–190 (IEPHDLPAGSQRAGKRPEEITD).

It belongs to the complex I 23 kDa subunit family. NDH-1 is composed of at least 11 different subunits. [4Fe-4S] cluster is required as a cofactor.

Its subcellular location is the cellular thylakoid membrane. The catalysed reaction is a plastoquinone + NADH + (n+1) H(+)(in) = a plastoquinol + NAD(+) + n H(+)(out). It carries out the reaction a plastoquinone + NADPH + (n+1) H(+)(in) = a plastoquinol + NADP(+) + n H(+)(out). Its function is as follows. NDH-1 shuttles electrons from an unknown electron donor, via FMN and iron-sulfur (Fe-S) centers, to quinones in the respiratory and/or the photosynthetic chain. The immediate electron acceptor for the enzyme in this species is believed to be plastoquinone. Couples the redox reaction to proton translocation, and thus conserves the redox energy in a proton gradient. This is NAD(P)H-quinone oxidoreductase subunit I from Microcystis aeruginosa (strain NIES-843 / IAM M-2473).